Consider the following 110-residue polypeptide: Small ribosomal subunit protein bS16 (110 aa).

A compositionally biased stretch (basic and acidic residues) spans 82 to 103 (VKKREARNNPEKAVPRKERKAQ). A disordered region spans residues 82-110 (VKKREARNNPEKAVPRKERKAQAEAAAKG).

The protein belongs to the bacterial ribosomal protein bS16 family.

This Bradyrhizobium sp. (strain ORS 278) protein is Small ribosomal subunit protein bS16.